The sequence spans 284 residues: MSADVHTGRLRFTKMHGAGNDFVVLDLRNGTPPPDASLAARLADRHFGVGCDQILTIETPRSAEAVAAYRIWNSDGSHSQQCGNGARCVAAWLVREGTAQGDVFTIDSPFTAHRVERLDAGTYSVAMGVPQFEPTQIPLAGFAHARDEYALPVHGETVRFGAVSMGNPHAVVEVGRVDAAPVERVGALLQQNAAFPESVNVGFAQVVDPAHVRLRVYERGVGETLACGSGACAAAVVLMHRGRVERDVRVSLPGGELRIRWAGEQAQVVMSGPAVFVFDGEWNQ.

Positions 20, 53, and 73 each coordinate substrate. Cys82 serves as the catalytic Proton donor. Substrate-binding positions include 83 to 84 (GN), Asn167, Asn200, and 218 to 219 (ER). Cys227 functions as the Proton acceptor in the catalytic mechanism. 228–229 (GS) is a binding site for substrate.

This sequence belongs to the diaminopimelate epimerase family. In terms of assembly, homodimer.

The protein localises to the cytoplasm. The catalysed reaction is (2S,6S)-2,6-diaminopimelate = meso-2,6-diaminopimelate. The protein operates within amino-acid biosynthesis; L-lysine biosynthesis via DAP pathway; DL-2,6-diaminopimelate from LL-2,6-diaminopimelate: step 1/1. Catalyzes the stereoinversion of LL-2,6-diaminopimelate (L,L-DAP) to meso-diaminopimelate (meso-DAP), a precursor of L-lysine and an essential component of the bacterial peptidoglycan. The protein is Diaminopimelate epimerase of Xanthomonas campestris pv. campestris (strain ATCC 33913 / DSM 3586 / NCPPB 528 / LMG 568 / P 25).